Here is a 322-residue protein sequence, read N- to C-terminus: ADP,ATP carrier protein (322 aa).

Solcar repeat units follow at residues 25–118, 130–222, and 230–316; these read STFF…FKKM, KWFA…LKPV, and GNFL…VQLL. The next 5 membrane-spanning stretches (helical) occupy residues 27–54, 95–119, 128–148, 198–219, and 233–253; these read FFFDFMMGGVSAAVSKTAAAPIERVKLL, TANVLRYFPTQALNFAFKDKFKKMF, YAKWFAGNLASGGAAGAASLL, FGPSVVGIVVYRGLYFGMYDTL, and LASFLLGWAVTTGSGVASYPL. Residues R100 and K112 each contribute to the ADP site. R257 contacts ADP. The segment at 257–262 is important for transport activity; sequence RRRMMM. Residues 257–262 carry the Nucleotide carrier signature motif motif; that stretch reads RRRMMM. The chain crosses the membrane as a helical span at residues 293–313; sequence AGANILRGVAGAGVLSIYDQV.

The protein belongs to the mitochondrial carrier (TC 2.A.29) family. In terms of assembly, monomer.

The protein resides in the mitochondrion inner membrane. The catalysed reaction is ADP(in) + ATP(out) = ADP(out) + ATP(in). With respect to regulation, the matrix-open state (m-state) is inhibited by the membrane-permeable bongkrekic acid (BKA). The cytoplasmic-open state (c-state) is inhibited by the membrane-impermeable toxic inhibitor carboxyatractyloside (CATR). Functionally, ADP:ATP antiporter that mediates import of ADP into the mitochondrial matrix for ATP synthesis, and export of ATP out to fuel the cell. Cycles between the cytoplasmic-open state (c-state) and the matrix-open state (m-state): operates by the alternating access mechanism with a single substrate-binding site intermittently exposed to either the cytosolic (c-state) or matrix (m-state) side of the inner mitochondrial membrane. This chain is ADP,ATP carrier protein (anc1), found in Schizosaccharomyces pombe (strain 972 / ATCC 24843) (Fission yeast).